The primary structure comprises 341 residues: B3 domain-containing transcription factor VRN1 (341 aa).

Residues 5 to 98 (FFHKLIFSST…AFSVYIFNLS (94 aa)) constitute a DNA-binding region (TF-B3 1). Residues 166–223 (GPVKAEEPTPTPKIPKKRGRKKKNADPEEINSSAPRDDDPENRSKFYESASARKRTVT) form a disordered region. Residues 179–188 (IPKKRGRKKK) show a composition bias toward basic residues. A compositionally biased stretch (basic and acidic residues) spans 200 to 211 (PRDDDPENRSKF). Residues 244-338 (FRVVLRPSYL…VLKVTAFRVN (95 aa)) constitute a DNA-binding region (TF-B3 2).

Expressed in roots and at lower levels in aerial parts.

The protein localises to the nucleus. Its function is as follows. Essential protein. Involved in the regulation of vernalization. Acts as a transcriptional repressor of FLC, a major target of the vernalization pathway. Binds DNA in vitro in a non-sequence-specific manner. This Arabidopsis thaliana (Mouse-ear cress) protein is B3 domain-containing transcription factor VRN1.